Reading from the N-terminus, the 257-residue chain is MLPSELVKYKKNSQKIIALTAWDSISGSLAEQSGADIVLVGDSLAMVCLGYKSTLPVTLENMIYHTNAVSRGFSREIEEHSLLVCDMPFLTYQCGEDKAVEYAGKIIKNTYAKAVKIEGAEPEVQTVISRLIRMGIPVMGHLGLTPQSYLNLGLKKQGLKKESYEKIKRDALSLEKLGCFSIVLEHIPELLAKEIQTDLEIPTIGIGAGVFCDGQVRVTADLLGLSDKQPPFCKPIVDGKKYFGEKLKEWVTSERLS.

Residues Asp42 and Asp86 each contribute to the Mg(2+) site. 3-methyl-2-oxobutanoate contacts are provided by residues 42-43 (DS), Asp86, and Lys116. Mg(2+) is bound at residue Glu118. Glu185 serves as the catalytic Proton acceptor.

It belongs to the PanB family. As to quaternary structure, homodecamer; pentamer of dimers. Mg(2+) is required as a cofactor.

Its subcellular location is the cytoplasm. It catalyses the reaction 3-methyl-2-oxobutanoate + (6R)-5,10-methylene-5,6,7,8-tetrahydrofolate + H2O = 2-dehydropantoate + (6S)-5,6,7,8-tetrahydrofolate. Its pathway is cofactor biosynthesis; (R)-pantothenate biosynthesis; (R)-pantoate from 3-methyl-2-oxobutanoate: step 1/2. In terms of biological role, catalyzes the reversible reaction in which hydroxymethyl group from 5,10-methylenetetrahydrofolate is transferred onto alpha-ketoisovalerate to form ketopantoate. This is 3-methyl-2-oxobutanoate hydroxymethyltransferase from Prochlorococcus marinus (strain MIT 9515).